The following is a 361-amino-acid chain: Nuclear pore complex protein NUP43 (361 aa).

Positions 51–73 (IQSLDPNPRGNHNTNPLIESLSS) are disordered. WD repeat units follow at residues 132 to 173 (FHVG…YRKV), 177 to 215 (NGLV…EAVS), and 225 to 265 (KTSA…QPIV).

As to quaternary structure, part of the nuclear pore complex (NPC). The NPC has an eight-fold symmetrical structure comprising a central transport channel and two rings, the cytoplasmic and nuclear rings, to which eight filaments are attached. The cytoplasmic filaments have loose ends, while the nuclear filaments are joined in a distal ring, forming a nuclear basket. NPCs are highly dynamic in configuration and composition, and can be devided in 3 subcomplexes, the NUP62 subcomplex, the NUP107-160 subcomplex and the NUP93 subcomplex, containing approximately 30 different nucleoporin proteins.

Its subcellular location is the nucleus envelope. It localises to the nucleus. The protein localises to the nuclear pore complex. The chain is Nuclear pore complex protein NUP43 from Arabidopsis thaliana (Mouse-ear cress).